The following is a 1135-amino-acid chain: Retinoblastoma-like protein 2 (1135 aa).

Residues 1 to 43 (MASGGNQSSPPPPAAAASSEEEEEDGDTADRAQPAGSPSHQIQ) form a disordered region. The residue at position 410 (Ser410) is a Phosphoserine. At Thr414 the chain carries Phosphothreonine. Positions 414 to 613 (TPVSTATHSL…DRIRDNENRV (200 aa)) are domain A. The tract at residues 414–1021 (TPVSTATHSL…QTFAMKYSQA (608 aa)) is pocket; binds E1A. Ser417 carries O-linked (GlcNAc) serine glycosylation. The tract at residues 614–824 (PTCEEVTPPH…QGQPLTSSSI (211 aa)) is spacer. Ser636 bears the Phosphoserine mark. Thr639 carries the phosphothreonine modification. 3 disordered regions span residues 649–698 (DAGG…PPQP), 806–825 (ISPG…SSIR), and 932–995 (RRNS…EEEE). Polar residues predominate over residues 656 to 674 (SVTSPTTLYDRYSSPTVST). 3 positions are modified to phosphoserine: Ser659, Ser669, and Ser684. Residues 806 to 818 (ISPGGQQQNQGQP) are compositionally biased toward low complexity. A domain B region spans residues 825–1021 (RPRKTSSLSL…QTFAMKYSQA (197 aa)). 2 stretches are compositionally biased toward polar residues: residues 935–950 (SGSC…PTEL) and 958–969 (DSSPVMRSNSTL). Ser942, Ser946, Ser960, Ser965, and Ser967 each carry phosphoserine. Residue Thr968 is modified to Phosphothreonine. The segment covering 971–981 (VPQPSSAPPTP) has biased composition (pro residues). 2 positions are modified to phosphoserine: Ser975 and Ser976. Thr980 is modified (phosphothreonine). A phosphoserine mark is found at Ser1031, Ser1064, Ser1076, and Ser1108.

It belongs to the retinoblastoma protein (RB) family. Interacts with AATF, KMT5B and KMT5C. Component of the DREAM complex (also named LINC complex) at least composed of E2F4, E2F5, LIN9, LIN37, LIN52, LIN54, MYBL1, MYBL2, RBL1, RBL2, RBBP4, TFDP1 and TFDP2. The complex exists in quiescent cells where it represses cell cycle-dependent genes. It dissociates in S phase when LIN9, LIN37, LIN52 and LIN54 form a subcomplex that binds to MYBL2. Interacts with USP4. Part of the peroxisome proliferator activated receptor alpha (PPAR-alpha) interacting complex (PRIC). Interacts with RINT1. Interacts with PML. Interacts with RBBP9. Interacts with CD53. Post-translationally, during G0 and early G1 phase of the cell cycle, phosphorylated on Ser-636 and on 5 sites within the domain B. Phosphorylation on Ser-669 in G1 leads to its ubiquitin-dependent proteolysis.

It localises to the nucleus. In terms of biological role, key regulator of entry into cell division. Directly involved in heterochromatin formation by maintaining overall chromatin structure and, in particular, that of constitutive heterochromatin by stabilizing histone methylation. Recruits and targets histone methyltransferases KMT5B and KMT5C, leading to epigenetic transcriptional repression. Controls histone H4 'Lys-20' trimethylation. Probably acts as a transcription repressor by recruiting chromatin-modifying enzymes to promoters. Potent inhibitor of E2F-mediated trans-activation, associates preferentially with E2F5. Binds to cyclins A and E. Binds to and may be involved in the transforming capacity of the adenovirus E1A protein. May act as a tumor suppressor. The chain is Retinoblastoma-like protein 2 (Rbl2) from Rattus norvegicus (Rat).